The primary structure comprises 533 residues: MHWADATSEKIMKKRNAEEYVVSSGITPSGHIHIGNARETLTADAVYKGMLKKGAEAKLIFIADDYDPLRKLYPFLPKEFEKYIGMPLSEIPCPQGCCKSYADHFLMPFLNSLEDLGVEITTHRANECYKAGMYNDAIITALENRLKIKELLDSYRKEPLADDWYPLNVVCEKCGKMHETKVINYNSEDKTITYVCKCGFENTVKPFNGIGKLPWRVDWPARWNIFGVTAEPMGKDHAASGGSYDTGIKIARQIFNYQAPEKMVYEWIQLKVGDKAMPMSSSSGVVFAVKDWTEICHPEVLRFLILKGKPTKHIDFDLKAISNLVDDYDELERKYFELIEKQKTEELNDNENEKISLYELVTPKIPERLPLQVAYRFCSIIAQIALDKETQKIDMERVFDILGRNGYNPAEFSEYDKSRLEKRLYMSKKWASDYGENLEINDLDQAKEQYETLSEEQKAWLKAFSKEVENIEIDANTIHELMYETATKLNLAPKEAFVASYKILLGKNYGPKLGSFLASLKKEFVIGRFNLTE.

Positions 28–36 (PSGHIHIGN) match the 'HIGH' region motif. The 'KMSKS' region signature appears at 278–282 (PMSSS).

The protein belongs to the class-I aminoacyl-tRNA synthetase family.

It is found in the cytoplasm. It carries out the reaction tRNA(Lys) + L-lysine + ATP = L-lysyl-tRNA(Lys) + AMP + diphosphate. The sequence is that of Lysine--tRNA ligase (lysS) from Methanococcus maripaludis (strain DSM 14266 / JCM 13030 / NBRC 101832 / S2 / LL).